We begin with the raw amino-acid sequence, 606 residues long: Phosphomethylpyrimidine synthase (606 aa).

The tract at residues 84 to 103 (EPYPARSVKPEDNGLTSSPI) is disordered. Substrate contacts are provided by residues Asn209, Met238, Tyr267, His303, 323-325 (SRG), 364-367 (DGLR), and Glu403. His407 contributes to the Zn(2+) binding site. Tyr430 is a binding site for substrate. His471 lines the Zn(2+) pocket. Positions 551, 554, and 559 each coordinate [4Fe-4S] cluster.

It belongs to the ThiC family. In terms of assembly, homodimer. The cofactor is [4Fe-4S] cluster.

It catalyses the reaction 5-amino-1-(5-phospho-beta-D-ribosyl)imidazole + S-adenosyl-L-methionine = 4-amino-2-methyl-5-(phosphooxymethyl)pyrimidine + CO + 5'-deoxyadenosine + formate + L-methionine + 3 H(+). The protein operates within cofactor biosynthesis; thiamine diphosphate biosynthesis. Catalyzes the synthesis of the hydroxymethylpyrimidine phosphate (HMP-P) moiety of thiamine from aminoimidazole ribotide (AIR) in a radical S-adenosyl-L-methionine (SAM)-dependent reaction. The polypeptide is Phosphomethylpyrimidine synthase (Bartonella tribocorum (strain CIP 105476 / IBS 506)).